The chain runs to 77 residues: Large ribosomal subunit protein bL28 (77 aa).

The protein belongs to the bacterial ribosomal protein bL28 family.

In Dechloromonas aromatica (strain RCB), this protein is Large ribosomal subunit protein bL28.